Consider the following 135-residue polypeptide: Regulator of ribonuclease activity B (135 aa).

A disordered region spans residues 114–135 (WGTYFESDEDDEEDESEDKPEA). Residues 119–135 (ESDEDDEEDESEDKPEA) show a composition bias toward acidic residues.

This sequence belongs to the RraB family. As to quaternary structure, interacts with the C-terminal region of Rne.

Its subcellular location is the cytoplasm. Globally modulates RNA abundance by binding to RNase E (Rne) and regulating its endonucleolytic activity. Can modulate Rne action in a substrate-dependent manner by altering the composition of the degradosome. This Photobacterium profundum (strain SS9) protein is Regulator of ribonuclease activity B.